Consider the following 230-residue polypeptide: MSSTSLLDEFGTPVQRVERAIEALKNGLGVLLMDDEDRENEGDLIFSAQHLTEAQMALMIREGSGIVCLCLTEERANWLDLPPMVKDNCSKNQTAFTVSIEAKEGVTTGVSAKDRVTTVKTATYFDAQPEDLARPGHVFPLVAKTNGVLARRGHTEGTIDLMYLANLVPSGILCELTNPDGTMAKLPETIEFARRHGMPVLTIEDIVDYRTGIDLRNEYKSGLVREVSWS.

Residues 38 to 39 (RE), aspartate 43, 151 to 155 (RRGHT), and glutamate 175 each bind D-ribulose 5-phosphate. Glutamate 39 contacts Mg(2+). Histidine 154 serves as a coordination point for Mg(2+).

Belongs to the DHBP synthase family. In terms of assembly, homodimer. The cofactor is Mg(2+). Mn(2+) serves as cofactor.

It catalyses the reaction D-ribulose 5-phosphate = (2S)-2-hydroxy-3-oxobutyl phosphate + formate + H(+). It participates in cofactor biosynthesis; riboflavin biosynthesis; 2-hydroxy-3-oxobutyl phosphate from D-ribulose 5-phosphate: step 1/1. Catalyzes the conversion of D-ribulose 5-phosphate to formate and 3,4-dihydroxy-2-butanone 4-phosphate. The chain is 3,4-dihydroxy-2-butanone 4-phosphate synthase from Vibrio harveyi (Beneckea harveyi).